The sequence spans 149 residues: UPF0756 membrane protein Nther_1957 (149 aa).

4 helical membrane-spanning segments follow: residues 5–25 (IVVLLFIFLIALIGKNDLVAT), 52–72 (LGILLLTLSVLTPFAAGDIMP), 85–105 (LIAVFSGIVASYLTGHGVELL), and 111–131 (VMVGLIVGSIIGASFLKGVPA).

Belongs to the UPF0756 family.

The protein localises to the cell membrane. The chain is UPF0756 membrane protein Nther_1957 from Natranaerobius thermophilus (strain ATCC BAA-1301 / DSM 18059 / JW/NM-WN-LF).